A 457-amino-acid polypeptide reads, in one-letter code: Putative adhesion G protein-coupled receptor E4P (457 aa).

The first 14 residues, 1 to 14 (MGSRFLLVLLSGAS), serve as a signal peptide directing secretion. 6 disulfide bridges follow: cysteine 15–cysteine 24, cysteine 18–cysteine 30, cysteine 32–cysteine 52, cysteine 58–cysteine 71, cysteine 65–cysteine 80, and cysteine 82–cysteine 103. The EGF-like 1 domain maps to 15-53 (CPPCPKYASCHNSTHCTCEDGFRARSGRTYFHDSSEKCE). The Extracellular segment spans residues 16–191 (PPCPKYASCH…LAPKEDPVLT (176 aa)). Asparagine 26 carries N-linked (GlcNAc...) asparagine glycosylation. The 51-residue stretch at 54–104 (DINECETGLAKCKYKAYCRNKVGGYICSCLVKYTLFNFLAGIIDYDHPDCY) folds into the EGF-like 2; calcium-binding domain. 2 N-linked (GlcNAc...) asparagine glycosylation sites follow: asparagine 106 and asparagine 162. The 53-residue stretch at 134-186 (DKRTKHICVYWEGSEGGWSTEGCSHVHSNGSYTKCKCFHLSSFAVLVALAPKE) folds into the GAIN-B domain. 2 disulfides stabilise this stretch: cysteine 141–cysteine 168 and cysteine 156–cysteine 170. The segment at 141–186 (CVYWEGSEGGWSTEGCSHVHSNGSYTKCKCFHLSSFAVLVALAPKE) is GPS. A helical transmembrane segment spans residues 192–212 (VITQVGLTISLLCLFLAILTF). Residues 213 to 223 (LLCRPIQNTST) are Cytoplasmic-facing. The chain crosses the membrane as a helical span at residues 224 to 244 (SLHLELSLCLFLAHLLFLTGI). An N-linked (GlcNAc...) asparagine glycan is attached at asparagine 245. Over 245–250 (NRTEPE) the chain is Extracellular. The chain crosses the membrane as a helical span at residues 251–271 (VLCSIIAGLLHFLYLACFTWM). Over 272-299 (LLEGLHLFLTVRNLKVANYTSTGRFKKR) the chain is Cytoplasmic. Residues 300–320 (FMYPVGYGIPAVIIAVSAIVG) form a helical membrane-spanning segment. Residues 321–336 (PQNYGTFTCWLKLDKG) lie on the Extracellular side of the membrane. Residues 337-357 (FIWSFMGPVAVIILINLVFYF) traverse the membrane as a helical segment. Topologically, residues 358 to 384 (QVLWILRSKLSSLNKEVSTIQDTRVMT) are cytoplasmic. A helical membrane pass occupies residues 385 to 405 (FKAISQLFILGCSWGLGFFMV). Residues 406 to 413 (EEVGKTIG) are Extracellular-facing. The helical transmembrane segment at 414-434 (SIIAYSFTIINTLQGVLLFVV) threads the bilayer. Residues 435–457 (HCLLNRQVRLIILSVISLVPKSN) lie on the Cytoplasmic side of the membrane.

It belongs to the G-protein coupled receptor 2 family. Adhesion G-protein coupled receptor (ADGR) subfamily. Forms a heterodimer, consisting of a large extracellular region (alpha subunit) non-covalently linked to a seven-transmembrane moiety (beta subunit). In terms of processing, glycosylated. Proteolytically cleaved into 2 subunits, an extracellular alpha subunit and a seven-transmembrane subunit.

It is found in the cell membrane. It localises to the secreted. Functionally, may mediate the cellular interaction between myeloid cells and B-cells. This chain is Putative adhesion G protein-coupled receptor E4P, found in Homo sapiens (Human).